The sequence spans 236 residues: Purine nucleoside phosphorylase DeoD-type 2 (236 aa).

Position 5 (H5) interacts with a purine D-ribonucleoside. Phosphate-binding positions include G21, R25, R44, and 88–91; that span reads RIGS. A purine D-ribonucleoside-binding positions include 180–182 and 204–205; these read DME and SD. The active-site Proton donor is the D205.

The protein belongs to the PNP/UDP phosphorylase family. Homohexamer; trimer of homodimers.

It carries out the reaction a purine D-ribonucleoside + phosphate = a purine nucleobase + alpha-D-ribose 1-phosphate. It catalyses the reaction a purine 2'-deoxy-D-ribonucleoside + phosphate = a purine nucleobase + 2-deoxy-alpha-D-ribose 1-phosphate. Catalyzes the reversible phosphorolytic breakdown of the N-glycosidic bond in the beta-(deoxy)ribonucleoside molecules, with the formation of the corresponding free purine bases and pentose-1-phosphate. In Vibrio cholerae serotype O1 (strain ATCC 39315 / El Tor Inaba N16961), this protein is Purine nucleoside phosphorylase DeoD-type 2.